The chain runs to 396 residues: 1-deoxy-D-xylulose 5-phosphate reductoisomerase (396 aa).

The NADPH site is built by T15, G16, S17, I18, G41, and N129. Residue K130 participates in 1-deoxy-D-xylulose 5-phosphate binding. Position 131 (E131) interacts with NADPH. D155 provides a ligand contact to Mn(2+). Positions 156, 157, 182, and 205 each coordinate 1-deoxy-D-xylulose 5-phosphate. E157 contacts Mn(2+). G211 contacts NADPH. 1-deoxy-D-xylulose 5-phosphate is bound by residues S218, N223, K224, and E227. E227 contributes to the Mn(2+) binding site.

The protein belongs to the DXR family. It depends on Mg(2+) as a cofactor. The cofactor is Mn(2+).

The catalysed reaction is 2-C-methyl-D-erythritol 4-phosphate + NADP(+) = 1-deoxy-D-xylulose 5-phosphate + NADPH + H(+). The protein operates within isoprenoid biosynthesis; isopentenyl diphosphate biosynthesis via DXP pathway; isopentenyl diphosphate from 1-deoxy-D-xylulose 5-phosphate: step 1/6. In terms of biological role, catalyzes the NADPH-dependent rearrangement and reduction of 1-deoxy-D-xylulose-5-phosphate (DXP) to 2-C-methyl-D-erythritol 4-phosphate (MEP). In Xanthomonas oryzae pv. oryzae (strain PXO99A), this protein is 1-deoxy-D-xylulose 5-phosphate reductoisomerase.